Consider the following 675-residue polypeptide: Methionine--tRNA ligase (675 aa).

A 'HIGH' region motif is present at residues 15–25 (PYANGPIHLGH). Positions 146, 149, 159, and 162 each coordinate Zn(2+). The 'KMSKS' region motif lies at 332-336 (KMSKS). An ATP-binding site is contributed by Lys-335. A tRNA-binding domain is found at 574 to 675 (DFAKIDLRVA…AGAKPGMRVK (102 aa)).

It belongs to the class-I aminoacyl-tRNA synthetase family. MetG type 1 subfamily. In terms of assembly, homodimer. Zn(2+) serves as cofactor.

It is found in the cytoplasm. The catalysed reaction is tRNA(Met) + L-methionine + ATP = L-methionyl-tRNA(Met) + AMP + diphosphate. Its function is as follows. Is required not only for elongation of protein synthesis but also for the initiation of all mRNA translation through initiator tRNA(fMet) aminoacylation. This Shewanella amazonensis (strain ATCC BAA-1098 / SB2B) protein is Methionine--tRNA ligase.